The primary structure comprises 84 residues: U21-theraphotoxin-Cg1a 2 (84 aa).

An N-terminal signal peptide occupies residues 1–21 (MKVSVLITLAVLGVMFLFTSA). The propeptide occupies 22-47 (EERGSDQMDSPAWLKSMEIIFQSEER). 3 disulfides stabilise this stretch: Cys49/Cys63, Cys56/Cys68, and Cys62/Cys76. Residue Val82 is modified to Valine amide.

Belongs to the neurotoxin 10 (Hwtx-1) family. 05 (F4a) subfamily. As to expression, expressed by the venom gland.

The protein localises to the secreted. Probable ion channel inhibitor. This Chilobrachys guangxiensis (Chinese earth tiger tarantula) protein is U21-theraphotoxin-Cg1a 2.